A 481-amino-acid polypeptide reads, in one-letter code: UDP-N-acetylmuramoyl-L-alanyl-D-glutamate--L-lysine ligase (481 aa).

S42 provides a ligand contact to UDP-N-acetyl-alpha-D-muramoyl-L-alanyl-D-glutamate. ATP is bound at residue 118 to 124; it reads GTKGKTT. UDP-N-acetyl-alpha-D-muramoyl-L-alanyl-D-glutamate is bound by residues 160–161, S187, and R195; that span reads TT. Position 229 is an N6-carboxylysine (K229). Residues 404–407 carry the L-lysine recognition motif motif; it reads DDPN.

It belongs to the MurCDEF family. MurE subfamily. In terms of processing, carboxylation is probably crucial for Mg(2+) binding and, consequently, for the gamma-phosphate positioning of ATP.

It localises to the cytoplasm. It carries out the reaction UDP-N-acetyl-alpha-D-muramoyl-L-alanyl-D-glutamate + L-lysine + ATP = UDP-N-acetyl-alpha-D-muramoyl-L-alanyl-gamma-D-glutamyl-L-lysine + ADP + phosphate + H(+). It participates in cell wall biogenesis; peptidoglycan biosynthesis. Catalyzes the addition of L-lysine to the nucleotide precursor UDP-N-acetylmuramoyl-L-alanyl-D-glutamate (UMAG) in the biosynthesis of bacterial cell-wall peptidoglycan. In Streptococcus sanguinis (strain SK36), this protein is UDP-N-acetylmuramoyl-L-alanyl-D-glutamate--L-lysine ligase.